Reading from the N-terminus, the 955-residue chain is Bifunctional glutamine synthetase adenylyltransferase/adenylyl-removing enzyme (955 aa).

Positions 1-458 are adenylyl removase; it reads MTAQAPLSVA…QFEQTFSDKQ (458 aa). Residues 464–955 form an adenylyl transferase region; sequence CAAIWHADLL…GSIDAASPTP (492 aa).

Belongs to the GlnE family. It depends on Mg(2+) as a cofactor.

The enzyme catalyses [glutamine synthetase]-O(4)-(5'-adenylyl)-L-tyrosine + phosphate = [glutamine synthetase]-L-tyrosine + ADP. It carries out the reaction [glutamine synthetase]-L-tyrosine + ATP = [glutamine synthetase]-O(4)-(5'-adenylyl)-L-tyrosine + diphosphate. Its function is as follows. Involved in the regulation of glutamine synthetase GlnA, a key enzyme in the process to assimilate ammonia. When cellular nitrogen levels are high, the C-terminal adenylyl transferase (AT) inactivates GlnA by covalent transfer of an adenylyl group from ATP to specific tyrosine residue of GlnA, thus reducing its activity. Conversely, when nitrogen levels are low, the N-terminal adenylyl removase (AR) activates GlnA by removing the adenylyl group by phosphorolysis, increasing its activity. The regulatory region of GlnE binds the signal transduction protein PII (GlnB) which indicates the nitrogen status of the cell. This Ralstonia nicotianae (strain ATCC BAA-1114 / GMI1000) (Ralstonia solanacearum) protein is Bifunctional glutamine synthetase adenylyltransferase/adenylyl-removing enzyme.